The chain runs to 481 residues: GTPase Der (481 aa).

2 EngA-type G domains span residues 47-210 (PVLA…PDVS) and 221-394 (RRVA…ESWE). Residues 53-60 (GRPNVGKS), 100-104 (DTGGW), 162-165 (NKVD), 227-234 (GRPNVGKS), 274-278 (DTAGI), and 339-342 (NKWD) each bind GTP. The region spanning 395-477 (TRIPTGKFNA…PIVLNMRVRE (83 aa)) is the KH-like domain.

Belongs to the TRAFAC class TrmE-Era-EngA-EngB-Septin-like GTPase superfamily. EngA (Der) GTPase family. Associates with the 50S ribosomal subunit.

In terms of biological role, GTPase that plays an essential role in the late steps of ribosome biogenesis. The chain is GTPase Der from Leifsonia xyli subsp. xyli (strain CTCB07).